Reading from the N-terminus, the 416-residue chain is Histidinol dehydrogenase (416 aa).

Y117, Q178, and N201 together coordinate NAD(+). Residues T224, Q246, and H249 each coordinate substrate. Zn(2+)-binding residues include Q246 and H249. Residues E314 and H315 each act as proton acceptor in the active site. Residues H315, D348, E402, and H407 each contribute to the substrate site. D348 lines the Zn(2+) pocket. A Zn(2+)-binding site is contributed by H407.

This sequence belongs to the histidinol dehydrogenase family. Zn(2+) is required as a cofactor.

The enzyme catalyses L-histidinol + 2 NAD(+) + H2O = L-histidine + 2 NADH + 3 H(+). The protein operates within amino-acid biosynthesis; L-histidine biosynthesis; L-histidine from 5-phospho-alpha-D-ribose 1-diphosphate: step 9/9. Catalyzes the sequential NAD-dependent oxidations of L-histidinol to L-histidinaldehyde and then to L-histidine. The protein is Histidinol dehydrogenase of Staphylococcus aureus (strain Mu50 / ATCC 700699).